A 566-amino-acid chain; its full sequence is Putative pentatricopeptide repeat-containing protein At1g28020 (566 aa).

PPR repeat units lie at residues 136-171 (GDSVYTSLLNSYARSDKTLCKAEATFQKMRDLGLLL), 172-206 (RPVPYNAMMSLYSALKNREKVEELLLEMKDNDVEA), 207-242 (DNVTVNNVLKLYSAVCDVTEMEKFLNKWEGIHGIKL), 243-273 (EWHTTLDMAKAYLRARSSGKAMKMLRLTEQL), 279-309 (LKSAYDHLMKLYGEAGNREEVLRVWKLYKSK), 314-348 (DNNGYRTVIRSLLKVDDIVGAEEIYKVWESLPLEF), 349-385 (DHRIPTMLASGYRDRGMTEKAEKLMNSKTIKDRRMNK), 468-504 (DYSVYVALLSSYAKSDKNLGNMVDEILREMEENNVDP), and 505-540 (DLITVNHVLKVYAAESKIQAMEMFMRRWGTEDGIKL).

This sequence belongs to the PPR family. P subfamily.

The chain is Putative pentatricopeptide repeat-containing protein At1g28020 from Arabidopsis thaliana (Mouse-ear cress).